Consider the following 413-residue polypeptide: 3-isopropylmalate dehydratase large subunit (413 aa).

Residues Cys295, Cys353, and Cys356 each coordinate [4Fe-4S] cluster.

Belongs to the aconitase/IPM isomerase family. LeuC type 2 subfamily. As to quaternary structure, heterodimer of LeuC and LeuD. The cofactor is [4Fe-4S] cluster.

It catalyses the reaction (2R,3S)-3-isopropylmalate = (2S)-2-isopropylmalate. It functions in the pathway amino-acid biosynthesis; L-leucine biosynthesis; L-leucine from 3-methyl-2-oxobutanoate: step 2/4. Its function is as follows. Catalyzes the isomerization between 2-isopropylmalate and 3-isopropylmalate, via the formation of 2-isopropylmaleate. In Pyrobaculum calidifontis (strain DSM 21063 / JCM 11548 / VA1), this protein is 3-isopropylmalate dehydratase large subunit.